Consider the following 155-residue polypeptide: Troponin C, isoform 3 (155 aa).

4 consecutive EF-hand domains span residues Glu-11–Pro-46, Phe-47–Glu-82, Ala-87–Gln-122, and Leu-123–Glu-155. The Ca(2+) site is built by Asp-60, Asp-62, Ser-64, Arg-66, and Glu-71. Ca(2+) is bound by residues Asp-136, Asp-138, Ser-140, Thr-142, and Glu-147.

It belongs to the troponin C family. Present in both larval and adult muscles.

This chain is Troponin C, isoform 3 (TpnC73F), found in Drosophila melanogaster (Fruit fly).